A 240-amino-acid polypeptide reads, in one-letter code: 4-hydroxy-tetrahydrodipicolinate reductase (240 aa).

NAD(+) is bound by residues 79–81 and 103–106; these read ATT and SANM. The Proton donor/acceptor role is filled by His-135. Position 136 (His-136) interacts with (S)-2,3,4,5-tetrahydrodipicolinate. Residue Lys-139 is the Proton donor of the active site. Position 145–146 (145–146) interacts with (S)-2,3,4,5-tetrahydrodipicolinate; that stretch reads GT.

It belongs to the DapB family.

It is found in the cytoplasm. The enzyme catalyses (S)-2,3,4,5-tetrahydrodipicolinate + NAD(+) + H2O = (2S,4S)-4-hydroxy-2,3,4,5-tetrahydrodipicolinate + NADH + H(+). It carries out the reaction (S)-2,3,4,5-tetrahydrodipicolinate + NADP(+) + H2O = (2S,4S)-4-hydroxy-2,3,4,5-tetrahydrodipicolinate + NADPH + H(+). The protein operates within amino-acid biosynthesis; L-lysine biosynthesis via DAP pathway; (S)-tetrahydrodipicolinate from L-aspartate: step 4/4. In terms of biological role, catalyzes the conversion of 4-hydroxy-tetrahydrodipicolinate (HTPA) to tetrahydrodipicolinate. This chain is 4-hydroxy-tetrahydrodipicolinate reductase, found in Staphylococcus saprophyticus subsp. saprophyticus (strain ATCC 15305 / DSM 20229 / NCIMB 8711 / NCTC 7292 / S-41).